The following is a 1430-amino-acid chain: Gag-Pol polyprotein (1430 aa).

Gly2 carries the N-myristoyl glycine; by host lipid modification. The interval 7–31 is interaction with Gp41; that stretch reads ILSGGKLDEWEKIQLRPGGKKRYKM. Residues 8–43 are interaction with host CALM1; it reads LSGGKLDEWEKIQLRPGGKKRYKMKHLIWASRELER. An interaction with host AP3D1 region spans residues 12–19; that stretch reads KLDEWEKI. The interaction with membrane phosphatidylinositol 4,5-bisphosphate and RNA stretch occupies residues 14 to 33; it reads DEWEKIQLRPGGKKRYKMKH. The short motif at 16–22 is the Nuclear export signal element; the sequence is WEKIQLR. Residues 26–32 carry the Nuclear localization signal motif; sequence KKRYKMK. The segment at 73 to 77 is interaction with membrane phosphatidylinositol 4,5-bisphosphate; the sequence is EELKS. A Phosphotyrosine; by host modification is found at Tyr128. The interval 185 to 223 is interaction with human PPIA/CYPA and NUP153; that stretch reads NTVGGHQAAMQMLKDTINEEAAEWDRLHPVHAGPAPPGQ. Positions 273–359 are dimerization/Multimerization of capsid protein p24; sequence YSPVSILDIK…GGPSHKARVL (87 aa). 2 consecutive CCHC-type zinc fingers follow at residues 384–401 and 405–422; these read VKCF…NCRA and KGCW…DCTE. The interval 438–475 is disordered; the sequence is EARKFPSEQTRANSPTSRELRVQRGDNPLSEAGAERRG. A compositionally biased stretch (polar residues) spans 444 to 454; sequence SEQTRANSPTS. The interval 483–487 is dimerization of protease; that stretch reads PQITL. A Peptidase A2 domain is found at 502 to 571; it reads KEALLDTGAD…TPVNIIGRNM (70 aa). Catalysis depends on Asp507, which acts as the For protease activity; shared with dimeric partner. Dimerization of protease stretches follow at residues 531–537 and 570–582; these read GIGGFIK and NMLT…LNFP. In terms of domain architecture, Reverse transcriptase spans 625 to 815; it reads EGKISKIGPE…PPFLWMGHEL (191 aa). Residues Asp691, Asp766, and Asp767 each contribute to the Mg(2+) site. Positions 808-816 are RT 'primer grip'; sequence FLWMGHELH. The short motif at 980-996 is the Tryptophan repeat motif element; that stretch reads WDTWWTDYWQATWIPEW. Residues 1016 to 1139 enclose the RNase H type-1 domain; it reads IAGADTFYVD…VDKLVSAGVR (124 aa). Mg(2+) contacts are provided by Asp1025, Glu1060, Asp1080, and Asp1131. The Integrase-type zinc-finger motif lies at 1145–1186; sequence DGIDKAQEEHEKYHNNWRAMASDFNLPPIVAKEIVASCDKCQ. Residues His1154, His1158, Cys1182, and Cys1185 each contribute to the Zn(2+) site. The region spanning 1196 to 1346 is the Integrase catalytic domain; that stretch reads VDCSPGIWQL…SAGERIIDII (151 aa). Mg(2+) is bound by residues Asp1206, Asp1258, and Glu1294. The segment at residues 1365 to 1412 is a DNA-binding region (integrase-type); it reads FRVYYRDSRNPVWKGPAKLLWKGEGAVVIQDNSEIKIVPRRKAKIIRD.

As to quaternary structure, homotrimer; further assembles as hexamers of trimers. Interacts with gp41 (via C-terminus). Interacts with host CALM1; this interaction induces a conformational change in the Matrix protein, triggering exposure of the myristate group. Interacts with host AP3D1; this interaction allows the polyprotein trafficking to multivesicular bodies during virus assembly. Part of the pre-integration complex (PIC) which is composed of viral genome, matrix protein, Vpr and integrase. In terms of assembly, homodimer; the homodimer further multimerizes as homohexamers or homopentamers. Interacts with human PPIA/CYPA; This interaction stabilizes the capsid. Interacts with human NUP153. Interacts with host PDZD8; this interaction stabilizes the capsid. Interacts with monkey TRIM5; this interaction destabilizes the capsid. Homodimer, whose active site consists of two apposed aspartic acid residues. As to quaternary structure, heterodimer of p66 RT and p51 RT (RT p66/p51). Heterodimerization of RT is essential for DNA polymerase activity. The overall folding of the subdomains is similar in p66 RT and p51 RT but the spatial arrangements of the subdomains are dramatically different. In terms of assembly, homotetramer; may further associate as a homohexadecamer. Part of the pre-integration complex (PIC) which is composed of viral genome, matrix protein, Vpr and integrase. Interacts with human SMARCB1/INI1 and human PSIP1/LEDGF isoform 1. Interacts with human KPNA3; this interaction might play a role in nuclear import of the pre-integration complex. Interacts with human NUP153; this interaction might play a role in nuclear import of the pre-integration complex. Mg(2+) serves as cofactor. Post-translationally, specific enzymatic cleavages by the viral protease yield mature proteins. The protease is released by autocatalytic cleavage. The polyprotein is cleaved during and after budding, this process is termed maturation. Proteolytic cleavage of p66 RT removes the RNase H domain to yield the p51 RT subunit. Nucleocapsid protein p7 might be further cleaved after virus entry. Tyrosine phosphorylated presumably in the virion by a host kinase. Phosphorylation is apparently not a major regulator of membrane association. In terms of processing, phosphorylated possibly by host MAPK1; this phosphorylation is necessary for Pin1-mediated virion uncoating. Post-translationally, methylated by host PRMT6, impairing its function by reducing RNA annealing and the initiation of reverse transcription.

It localises to the host cell membrane. The protein resides in the host endosome. It is found in the host multivesicular body. The protein localises to the virion membrane. Its subcellular location is the host nucleus. It localises to the host cytoplasm. The protein resides in the virion. The enzyme catalyses Specific for a P1 residue that is hydrophobic, and P1' variable, but often Pro.. The catalysed reaction is Endohydrolysis of RNA in RNA/DNA hybrids. Three different cleavage modes: 1. sequence-specific internal cleavage of RNA. Human immunodeficiency virus type 1 and Moloney murine leukemia virus enzymes prefer to cleave the RNA strand one nucleotide away from the RNA-DNA junction. 2. RNA 5'-end directed cleavage 13-19 nucleotides from the RNA end. 3. DNA 3'-end directed cleavage 15-20 nucleotides away from the primer terminus.. It carries out the reaction 3'-end directed exonucleolytic cleavage of viral RNA-DNA hybrid.. It catalyses the reaction DNA(n) + a 2'-deoxyribonucleoside 5'-triphosphate = DNA(n+1) + diphosphate. Its activity is regulated as follows. Protease: The viral protease is inhibited by many synthetic protease inhibitors (PIs), such as amprenavir, atazanavir, indinavir, loprinavir, nelfinavir, ritonavir and saquinavir. Use of protease inhibitors in tritherapy regimens permit more ambitious therapeutic strategies. Reverse transcriptase/ribonuclease H: RT can be inhibited either by nucleoside RT inhibitors (NRTIs) or by non nucleoside RT inhibitors (NNRTIs). NRTIs act as chain terminators, whereas NNRTIs inhibit DNA polymerization by binding a small hydrophobic pocket near the RT active site and inducing an allosteric change in this region. Classical NRTIs are abacavir, adefovir (PMEA), didanosine (ddI), lamivudine (3TC), stavudine (d4T), tenofovir (PMPA), zalcitabine (ddC), and zidovudine (AZT). Classical NNRTIs are atevirdine (BHAP U-87201E), delavirdine, efavirenz (DMP-266), emivirine (I-EBU), and nevirapine (BI-RG-587). The tritherapies used as a basic effective treatment of AIDS associate two NRTIs and one NNRTI. Mediates, with Gag polyprotein, the essential events in virion assembly, including binding the plasma membrane, making the protein-protein interactions necessary to create spherical particles, recruiting the viral Env proteins, and packaging the genomic RNA via direct interactions with the RNA packaging sequence (Psi). Gag-Pol polyprotein may regulate its own translation, by the binding genomic RNA in the 5'-UTR. At low concentration, the polyprotein would promote translation, whereas at high concentration, the polyprotein would encapsidate genomic RNA and then shut off translation. In terms of biological role, targets the polyprotein to the plasma membrane via a multipartite membrane-binding signal, that includes its myristoylated N-terminus. Matrix protein is part of the pre-integration complex. Implicated in the release from host cell mediated by Vpu. Binds to RNA. Its function is as follows. Forms the conical core that encapsulates the genomic RNA-nucleocapsid complex in the virion. Most core are conical, with only 7% tubular. The core is constituted by capsid protein hexamer subunits. The core is disassembled soon after virion entry. Host restriction factors such as TRIM5-alpha or TRIMCyp bind retroviral capsids and cause premature capsid disassembly, leading to blocks in reverse transcription. Capsid restriction by TRIM5 is one of the factors which restricts HIV-1 to the human species. Host PIN1 apparently facilitates the virion uncoating. On the other hand, interactions with PDZD8 or CYPA stabilize the capsid. Functionally, encapsulates and protects viral dimeric unspliced genomic RNA (gRNA). Binds these RNAs through its zinc fingers. Acts as a nucleic acid chaperone which is involved in rearangement of nucleic acid secondary structure during gRNA retrotranscription. Also facilitates template switch leading to recombination. As part of the polyprotein, participates in gRNA dimerization, packaging, tRNA incorporation and virion assembly. Aspartyl protease that mediates proteolytic cleavages of Gag and Gag-Pol polyproteins during or shortly after the release of the virion from the plasma membrane. Cleavages take place as an ordered, step-wise cascade to yield mature proteins. This process is called maturation. Displays maximal activity during the budding process just prior to particle release from the cell. Also cleaves Nef and Vif, probably concomitantly with viral structural proteins on maturation of virus particles. Hydrolyzes host EIF4GI and PABP1 in order to shut off the capped cellular mRNA translation. The resulting inhibition of cellular protein synthesis serves to ensure maximal viral gene expression and to evade host immune response. Also mediates cleavage of host YTHDF3. Mediates cleavage of host CARD8, thereby activating the CARD8 inflammasome, leading to the clearance of latent HIV-1 in patient CD4(+) T-cells after viral reactivation; in contrast, HIV-1 can evade CARD8-sensing when its protease remains inactive in infected cells prior to viral budding. In terms of biological role, multifunctional enzyme that converts the viral RNA genome into dsDNA in the cytoplasm, shortly after virus entry into the cell. This enzyme displays a DNA polymerase activity that can copy either DNA or RNA templates, and a ribonuclease H (RNase H) activity that cleaves the RNA strand of RNA-DNA heteroduplexes in a partially processive 3' to 5' endonucleasic mode. Conversion of viral genomic RNA into dsDNA requires many steps. A tRNA(3)-Lys binds to the primer-binding site (PBS) situated at the 5'-end of the viral RNA. RT uses the 3' end of the tRNA primer to perform a short round of RNA-dependent minus-strand DNA synthesis. The reading proceeds through the U5 region and ends after the repeated (R) region which is present at both ends of viral RNA. The portion of the RNA-DNA heteroduplex is digested by the RNase H, resulting in a ssDNA product attached to the tRNA primer. This ssDNA/tRNA hybridizes with the identical R region situated at the 3' end of viral RNA. This template exchange, known as minus-strand DNA strong stop transfer, can be either intra- or intermolecular. RT uses the 3' end of this newly synthesized short ssDNA to perform the RNA-dependent minus-strand DNA synthesis of the whole template. RNase H digests the RNA template except for two polypurine tracts (PPTs) situated at the 5'-end and near the center of the genome. It is not clear if both polymerase and RNase H activities are simultaneous. RNase H probably can proceed both in a polymerase-dependent (RNA cut into small fragments by the same RT performing DNA synthesis) and a polymerase-independent mode (cleavage of remaining RNA fragments by free RTs). Secondly, RT performs DNA-directed plus-strand DNA synthesis using the PPTs that have not been removed by RNase H as primers. PPTs and tRNA primers are then removed by RNase H. The 3' and 5' ssDNA PBS regions hybridize to form a circular dsDNA intermediate. Strand displacement synthesis by RT to the PBS and PPT ends produces a blunt ended, linear dsDNA copy of the viral genome that includes long terminal repeats (LTRs) at both ends. Its function is as follows. Catalyzes viral DNA integration into the host chromosome, by performing a series of DNA cutting and joining reactions. This enzyme activity takes place after virion entry into a cell and reverse transcription of the RNA genome in dsDNA. The first step in the integration process is 3' processing. This step requires a complex comprising the viral genome, matrix protein, Vpr and integrase. This complex is called the pre-integration complex (PIC). The integrase protein removes 2 nucleotides from each 3' end of the viral DNA, leaving recessed CA OH's at the 3' ends. In the second step, the PIC enters cell nucleus. This process is mediated through integrase and Vpr proteins, and allows the virus to infect a non dividing cell. This ability to enter the nucleus is specific of lentiviruses, other retroviruses cannot and rely on cell division to access cell chromosomes. In the third step, termed strand transfer, the integrase protein joins the previously processed 3' ends to the 5' ends of strands of target cellular DNA at the site of integration. The 5'-ends are produced by integrase-catalyzed staggered cuts, 5 bp apart. A Y-shaped, gapped, recombination intermediate results, with the 5'-ends of the viral DNA strands and the 3' ends of target DNA strands remaining unjoined, flanking a gap of 5 bp. The last step is viral DNA integration into host chromosome. This involves host DNA repair synthesis in which the 5 bp gaps between the unjoined strands are filled in and then ligated. Since this process occurs at both cuts flanking the HIV genome, a 5 bp duplication of host DNA is produced at the ends of HIV-1 integration. Alternatively, Integrase may catalyze the excision of viral DNA just after strand transfer, this is termed disintegration. In Homo sapiens (Human), this protein is Gag-Pol polyprotein (gag-pol).